Here is a 690-residue protein sequence, read N- to C-terminus: Potassium-transporting ATPase ATP-binding subunit (690 aa).

A run of 4 helical transmembrane segments spans residues 49-69 (SPVM…CFVP), 72-92 (AVPT…VLFA), 229-249 (VALD…VVTL), and 253-273 (ALFA…VTLI). Aspartate 317 acts as the 4-aspartylphosphate intermediate in catalysis. Residues aspartate 354, glutamate 358, 385 to 392 (FSAETRLS), and lysine 403 each bind ATP. The Mg(2+) site is built by aspartate 526 and aspartate 530. 3 consecutive transmembrane segments (helical) span residues 596–616 (FAIL…LNVM), 624–644 (AILS…PLAL), and 662–682 (LLIY…AIDL).

It belongs to the cation transport ATPase (P-type) (TC 3.A.3) family. Type IA subfamily. In terms of assembly, the system is composed of three essential subunits: KdpA, KdpB and KdpC.

The protein resides in the cell inner membrane. It catalyses the reaction K(+)(out) + ATP + H2O = K(+)(in) + ADP + phosphate + H(+). Part of the high-affinity ATP-driven potassium transport (or Kdp) system, which catalyzes the hydrolysis of ATP coupled with the electrogenic transport of potassium into the cytoplasm. This subunit is responsible for energy coupling to the transport system and for the release of the potassium ions to the cytoplasm. The sequence is that of Potassium-transporting ATPase ATP-binding subunit from Pseudomonas aeruginosa (strain ATCC 15692 / DSM 22644 / CIP 104116 / JCM 14847 / LMG 12228 / 1C / PRS 101 / PAO1).